We begin with the raw amino-acid sequence, 252 residues long: Triosephosphate isomerase (252 aa).

10 to 12 (NWK) lines the substrate pocket. Residue histidine 96 is the Electrophile of the active site. Glutamate 168 (proton acceptor) is an active-site residue. Substrate contacts are provided by residues glycine 174, serine 214, and 235 to 236 (GG).

The protein belongs to the triosephosphate isomerase family. Homodimer.

The protein resides in the cytoplasm. The catalysed reaction is D-glyceraldehyde 3-phosphate = dihydroxyacetone phosphate. It functions in the pathway carbohydrate biosynthesis; gluconeogenesis. It participates in carbohydrate degradation; glycolysis; D-glyceraldehyde 3-phosphate from glycerone phosphate: step 1/1. Its function is as follows. Involved in the gluconeogenesis. Catalyzes stereospecifically the conversion of dihydroxyacetone phosphate (DHAP) to D-glyceraldehyde-3-phosphate (G3P). This Lactobacillus acidophilus (strain ATCC 700396 / NCK56 / N2 / NCFM) protein is Triosephosphate isomerase.